A 215-amino-acid polypeptide reads, in one-letter code: Beta-crystallin A3 (215 aa).

The tract at residues 1-30 (MGEAAVPPELDTFPAAKMAQTNPLPVPMGP) is N-terminal arm. Beta/gamma crystallin 'Greek key' domains follow at residues 31–70 (WKITVYDQENFQGKRMEFTSACPNIMECGFDNIRSLKVEC) and 71–117 (GAWV…RPVC). Residues 118-123 (SANHKE) are connecting peptide. Beta/gamma crystallin 'Greek key' domains follow at residues 124-165 (SKIT…KIPC) and 166-214 (GAWV…RRIQ).

Belongs to the beta/gamma-crystallin family. Homo/heterodimer, or complexes of higher-order. The structure of beta-crystallin oligomers seems to be stabilized through interactions between the N-terminal arms.

Its function is as follows. Crystallins are the dominant structural components of the vertebrate eye lens. In Gallus gallus (Chicken), this protein is Beta-crystallin A3 (CRYBA1).